We begin with the raw amino-acid sequence, 394 residues long: 1-deoxy-D-xylulose 5-phosphate reductoisomerase (394 aa).

NADPH is bound by residues Thr12, Gly13, Ser14, Ile15, Lys39, Gln40, and Asn126. Residue Lys127 participates in 1-deoxy-D-xylulose 5-phosphate binding. Glu128 is a binding site for NADPH. Residue Asp152 participates in Mn(2+) binding. 1-deoxy-D-xylulose 5-phosphate contacts are provided by Ser153, Glu154, Ser183, and His206. Glu154 is a Mn(2+) binding site. Gly212 provides a ligand contact to NADPH. Residues Ser219, Asn224, Lys225, and Glu228 each coordinate 1-deoxy-D-xylulose 5-phosphate. Glu228 lines the Mn(2+) pocket.

This sequence belongs to the DXR family. Mg(2+) serves as cofactor. It depends on Mn(2+) as a cofactor.

The catalysed reaction is 2-C-methyl-D-erythritol 4-phosphate + NADP(+) = 1-deoxy-D-xylulose 5-phosphate + NADPH + H(+). It participates in isoprenoid biosynthesis; isopentenyl diphosphate biosynthesis via DXP pathway; isopentenyl diphosphate from 1-deoxy-D-xylulose 5-phosphate: step 1/6. Its function is as follows. Catalyzes the NADPH-dependent rearrangement and reduction of 1-deoxy-D-xylulose-5-phosphate (DXP) to 2-C-methyl-D-erythritol 4-phosphate (MEP). The polypeptide is 1-deoxy-D-xylulose 5-phosphate reductoisomerase (Neisseria meningitidis serogroup B (strain ATCC BAA-335 / MC58)).